Reading from the N-terminus, the 200-residue chain is Recombination protein RecR (200 aa).

Residues 59–74 (CGTCGSLDVTDPCAVC) form a C4-type zinc finger. One can recognise a Toprim domain in the interval 82–177 (RLLCVVEEVG…PVTMLARGVP (96 aa)).

It belongs to the RecR family.

Its function is as follows. May play a role in DNA repair. It seems to be involved in an RecBC-independent recombinational process of DNA repair. It may act with RecF and RecO. In Caulobacter vibrioides (strain ATCC 19089 / CIP 103742 / CB 15) (Caulobacter crescentus), this protein is Recombination protein RecR.